Reading from the N-terminus, the 444-residue chain is Probable galactarate/D-glucarate transporter GarP (444 aa).

At 1-11 (MILDTVDEKKK) the chain is on the cytoplasmic side. A helical membrane pass occupies residues 12–32 (GVHTRYLILLIIFIVTAVNYA). Over 33-56 (DRATLSIAGTEVAKELQLSAVSMG) the chain is Periplasmic. The helical transmembrane segment at 57 to 77 (YIFSAFGWAYLLMQIPGGWLL) threads the bilayer. Over 78–89 (DKFGSKKVYTYS) the chain is Cytoplasmic. 2 consecutive transmembrane segments (helical) span residues 90 to 110 (LFFW…PLAW) and 111 to 131 (AGIS…PSFP). The Cytoplasmic segment spans residues 132–157 (ANARIVAAWFPTKERGTASAIFNSAQ). 2 consecutive transmembrane segments (helical) span residues 158–178 (YFSL…WGWE) and 179–199 (HVFT…IKLI). Topologically, residues 200–252 (HNPTDHPRMSAEELKFISENGAVVDMDHKKPGSAAASGPKLHYIKQLLSNRMM) are cytoplasmic. Residues 253–273 (LGVFFGQYFINTITWFFLTWF) traverse the membrane as a helical segment. The Periplasmic segment spans residues 274 to 288 (PIYLVQEKGMSILKV). A helical membrane pass occupies residues 289–309 (GLVASIPALCGFAGGVLGGVF). Residues 310–319 (SDYLIKRGLS) are Cytoplasmic-facing. The chain crosses the membrane as a helical span at residues 320–340 (LTLARKLPIVLGMLLASTIIL). Over 341 to 350 (CNYTNNTTLV) the chain is Periplasmic. A helical membrane pass occupies residues 351-371 (VMLMALAFFGKGFGALGWPVI). At 372-385 (SDTAPKEIVGLCGG) the chain is on the cytoplasmic side. Residues 386–406 (VFNVFGNVASIVTPLVIGYLV) traverse the membrane as a helical segment. The Periplasmic segment spans residues 407 to 413 (SELHSFN). A helical membrane pass occupies residues 414–434 (AALVFVGCSALMAMVCYLFVV). The Cytoplasmic portion of the chain corresponds to 435–444 (GDIKRMELQK).

The protein belongs to the major facilitator superfamily. Phthalate permease family.

The protein localises to the cell inner membrane. The catalysed reaction is galactarate(in) + H(+)(in) = galactarate(out) + H(+)(out). It catalyses the reaction D-glucarate(in) + H(+)(in) = D-glucarate(out) + H(+)(out). The enzyme catalyses (R)-glycerate(in) + H(+)(in) = (R)-glycerate(out) + H(+)(out). Its function is as follows. Probably involved in the uptake of galactarate and/or D-glucarate. May also transport D-glycerate. This is Probable galactarate/D-glucarate transporter GarP from Escherichia coli (strain K12).